Here is a 450-residue protein sequence, read N- to C-terminus: Flavin-containing monooxygenase FMO GS-OX-like 3 (450 aa).

FAD is bound at residue 17-22 (GAGPAG). 215-220 (GNSSSA) serves as a coordination point for NADP(+).

It belongs to the FMO family. It depends on FAD as a cofactor.

Functionally, catalyzes the conversion of methylthioalkyl glucosinolates of any chain length into methylsulfinylalkyl glucosinolates. In Arabidopsis thaliana (Mouse-ear cress), this protein is Flavin-containing monooxygenase FMO GS-OX-like 3.